The sequence spans 302 residues: Dihydroorotate dehydrogenase B (NAD(+)), catalytic subunit (302 aa).

FMN is bound by residues Ser-20 and 44-45 (KG). Substrate contacts are provided by residues Lys-44 and 68-72 (NSVGL). FMN contacts are provided by Asn-98 and Asn-125. Asn-125 serves as a coordination point for substrate. Cys-128 acts as the Nucleophile in catalysis. 2 residues coordinate FMN: Lys-163 and Ile-189. 190 to 191 (NT) contributes to the substrate binding site. FMN-binding positions include Gly-215, 241–242 (GG), and 263–264 (GT).

This sequence belongs to the dihydroorotate dehydrogenase family. Type 1 subfamily. As to quaternary structure, heterotetramer of 2 PyrK and 2 PyrD type B subunits. The cofactor is FMN.

The protein localises to the cytoplasm. The catalysed reaction is (S)-dihydroorotate + NAD(+) = orotate + NADH + H(+). It participates in pyrimidine metabolism; UMP biosynthesis via de novo pathway; orotate from (S)-dihydroorotate (NAD(+) route): step 1/1. Catalyzes the conversion of dihydroorotate to orotate with NAD(+) as electron acceptor. The sequence is that of Dihydroorotate dehydrogenase B (NAD(+)), catalytic subunit (pyrD) from Thermoanaerobacter pseudethanolicus (strain ATCC 33223 / 39E) (Clostridium thermohydrosulfuricum).